Consider the following 362-residue polypeptide: D-alanine--D-alanine ligase (362 aa).

An ATP-grasp domain is found at 134–345 (KILAQRAGVP…YPDLITRLIR (212 aa)). 170-225 (GQLGTSNLFVKPSNQGSSVGITHVTDDSNYAEALAEAFKYDDKVLVEEGIVGTEVE) lines the ATP pocket. Mg(2+)-binding residues include Asp-298, Glu-312, and Asn-314.

It belongs to the D-alanine--D-alanine ligase family. Requires Mg(2+) as cofactor. It depends on Mn(2+) as a cofactor.

The protein localises to the cytoplasm. The catalysed reaction is 2 D-alanine + ATP = D-alanyl-D-alanine + ADP + phosphate + H(+). It participates in cell wall biogenesis; peptidoglycan biosynthesis. Functionally, cell wall formation. This chain is D-alanine--D-alanine ligase, found in Lactobacillus delbrueckii subsp. bulgaricus (strain ATCC 11842 / DSM 20081 / BCRC 10696 / JCM 1002 / NBRC 13953 / NCIMB 11778 / NCTC 12712 / WDCM 00102 / Lb 14).